The sequence spans 97 residues: Aspartyl/glutamyl-tRNA(Asn/Gln) amidotransferase subunit C (97 aa).

Belongs to the GatC family. In terms of assembly, heterotrimer of A, B and C subunits.

It carries out the reaction L-glutamyl-tRNA(Gln) + L-glutamine + ATP + H2O = L-glutaminyl-tRNA(Gln) + L-glutamate + ADP + phosphate + H(+). The catalysed reaction is L-aspartyl-tRNA(Asn) + L-glutamine + ATP + H2O = L-asparaginyl-tRNA(Asn) + L-glutamate + ADP + phosphate + 2 H(+). Allows the formation of correctly charged Asn-tRNA(Asn) or Gln-tRNA(Gln) through the transamidation of misacylated Asp-tRNA(Asn) or Glu-tRNA(Gln) in organisms which lack either or both of asparaginyl-tRNA or glutaminyl-tRNA synthetases. The reaction takes place in the presence of glutamine and ATP through an activated phospho-Asp-tRNA(Asn) or phospho-Glu-tRNA(Gln). The sequence is that of Aspartyl/glutamyl-tRNA(Asn/Gln) amidotransferase subunit C from Prochlorococcus marinus (strain MIT 9303).